A 520-amino-acid chain; its full sequence is Nonsense-mediated mRNA decay factor SMG9 (520 aa).

The segment at Met1–Thr143 is disordered. An N-acetylserine modification is found at Ser2. 5 positions are modified to phosphoserine: Ser2, Ser4, Ser7, Ser32, and Ser53. Residues Gly36–Ser53 show a composition bias toward basic and acidic residues. Pro residues predominate over residues Gln78–Leu94. A compositionally biased stretch (low complexity) spans Gly109 to Gly121. Pro residues predominate over residues Thr122 to Pro133. Position 451 is a phosphoserine (Ser451).

It belongs to the SMG9 family. Self-associates to form homodimers and forms heterodimers with SMG8; these assembly forms may represent SMG1C intermediate forms. Component of the SMG1C complex composed of SMG1, SMG8 and SMG9. Self-associates to form homodimers and forms heterodimers with SMG8; these assembly forms may represent SMG1C intermediate forms. Interacts with DHX34; the interaction is RNA-independent. Post-translationally, phosphorylated by SMG1.

In terms of biological role, involved in nonsense-mediated decay (NMD) of mRNAs containing premature stop codons. Is recruited by release factors to stalled ribosomes together with SMG1 and SMG8 (forming the SMG1C protein kinase complex) and, in the SMG1C complex, is required for the efficient association between SMG1 and SMG8. Plays a role in brain, heart, and eye development. This is Nonsense-mediated mRNA decay factor SMG9 from Bos taurus (Bovine).